An 89-amino-acid polypeptide reads, in one-letter code: MALDPAVKQQIIKEYATHEGDTGSPEVQIAVLSRRIKDLTEHLKEHKHDHHTRRGLMGLVGRRRRMLGYLQNVDIERYRALIERLGLRK.

The protein belongs to the universal ribosomal protein uS15 family. In terms of assembly, part of the 30S ribosomal subunit. Forms a bridge to the 50S subunit in the 70S ribosome, contacting the 23S rRNA.

In terms of biological role, one of the primary rRNA binding proteins, it binds directly to 16S rRNA where it helps nucleate assembly of the platform of the 30S subunit by binding and bridging several RNA helices of the 16S rRNA. Forms an intersubunit bridge (bridge B4) with the 23S rRNA of the 50S subunit in the ribosome. This Micrococcus luteus (strain ATCC 4698 / DSM 20030 / JCM 1464 / CCM 169 / CCUG 5858 / IAM 1056 / NBRC 3333 / NCIMB 9278 / NCTC 2665 / VKM Ac-2230) (Micrococcus lysodeikticus) protein is Small ribosomal subunit protein uS15.